Consider the following 370-residue polypeptide: G-protein coupled receptor homolog K2 (370 aa).

The Extracellular portion of the chain corresponds to 1-61 (MTSPTNSTML…CTFLEDTKYH (61 aa)). Residues Asn-6 and Asn-51 are each glycosylated (N-linked (GlcNAc...) asparagine; by host). A helical membrane pass occupies residues 62–82 (IIVIHIILFLLGSIGNIFVVS). Topologically, residues 83-94 (LIAFKRNKSITD) are cytoplasmic. A helical membrane pass occupies residues 95–115 (IYILNLSMSDCIFVFQIPFIV). Residues 116–131 (YSKLDQWIFGNILCKI) lie on the Extracellular side of the membrane. The chain crosses the membrane as a helical span at residues 132–152 (MSVLYYVGFFSNMFIITLMSI). Residues 153–171 (DRYFAIVHPIKRQPYRTKR) are Cytoplasmic-facing. A helical membrane pass occupies residues 172–192 (IGILMCCSAWLLSLILSSPVS). At 193-223 (KLYENIPHMSKDIYQCTLTNENDSIIAFIKR) the chain is on the extracellular side. The helical transmembrane segment at 224 to 244 (LMQIEITILGFLIPIIIFVYC) threads the bilayer. Over 245–265 (YYRIFTTVVRLRNRRKYKSIK) the chain is Cytoplasmic. The helical transmembrane segment at 266–286 (IVLMIVVCSLICWIPLYIVLM) threads the bilayer. Over 287–300 (IATIVSLYTSNIFR) the chain is Extracellular. The helical transmembrane segment at 301-321 (HLCLYLNLAYAITFSETISLA) threads the bilayer. The Cytoplasmic segment spans residues 322-370 (RCCINPIIYTLIGEHVRSRISSICSCIYRDNRIRKKLFSRKSSSSSNII).

Belongs to the G-protein coupled receptor 1 family.

The protein localises to the host cell membrane. Functionally, putative chemokine receptor. This Sus scrofa (Pig) protein is G-protein coupled receptor homolog K2.